The chain runs to 365 residues: Anthranilate phosphoribosyltransferase (365 aa).

5-phospho-alpha-D-ribose 1-diphosphate contacts are provided by residues Gly-96, 99 to 100 (GD), Thr-104, 106 to 109 (NIST), 124 to 132 (KHGNRSVSS), and Ser-136. Gly-96 contacts anthranilate. Mg(2+) is bound at residue Ser-108. Residue Asn-127 participates in anthranilate binding. An anthranilate-binding site is contributed by Arg-182. Mg(2+)-binding residues include Asp-240 and Glu-241.

The protein belongs to the anthranilate phosphoribosyltransferase family. As to quaternary structure, homodimer. Mg(2+) is required as a cofactor.

It carries out the reaction N-(5-phospho-beta-D-ribosyl)anthranilate + diphosphate = 5-phospho-alpha-D-ribose 1-diphosphate + anthranilate. Its pathway is amino-acid biosynthesis; L-tryptophan biosynthesis; L-tryptophan from chorismate: step 2/5. Functionally, catalyzes the transfer of the phosphoribosyl group of 5-phosphorylribose-1-pyrophosphate (PRPP) to anthranilate to yield N-(5'-phosphoribosyl)-anthranilate (PRA). The sequence is that of Anthranilate phosphoribosyltransferase from Colwellia psychrerythraea (strain 34H / ATCC BAA-681) (Vibrio psychroerythus).